The primary structure comprises 188 residues: UPF0200 protein M1627_1244 (188 aa).

15-22 contributes to the ATP binding site; that stretch reads GMPGSGKS.

It belongs to the UPF0200 family.

The sequence is that of UPF0200 protein M1627_1244 from Saccharolobus islandicus (strain M.16.27) (Sulfolobus islandicus).